The primary structure comprises 481 residues: NADH-quinone oxidoreductase subunit N (481 aa).

13 consecutive transmembrane segments (helical) span residues 9 to 29 (MLPE…GIVV), 39 to 59 (AVSM…DHVA), 76 to 96 (CISR…FLCA), 104 to 124 (FSVV…AGHF), 158 to 178 (FFIL…LVYG), 205 to 225 (AFVL…MWAV), 232 to 252 (PMAA…LLLA), 265 to 285 (ILYG…LGAL), 293 to 313 (LLAY…VLHG), 318 to 338 (AIFH…SVLL), 359 to 379 (FVAF…PFLG), 399 to 419 (VAFP…FYCF), and 443 to 463 (LGLT…LFLA).

This sequence belongs to the complex I subunit 2 family. As to quaternary structure, NDH-1 is composed of 14 different subunits. Subunits NuoA, H, J, K, L, M, N constitute the membrane sector of the complex.

The protein localises to the cell inner membrane. The enzyme catalyses a quinone + NADH + 5 H(+)(in) = a quinol + NAD(+) + 4 H(+)(out). Functionally, NDH-1 shuttles electrons from NADH, via FMN and iron-sulfur (Fe-S) centers, to quinones in the respiratory chain. The immediate electron acceptor for the enzyme in this species is believed to be ubiquinone. Couples the redox reaction to proton translocation (for every two electrons transferred, four hydrogen ions are translocated across the cytoplasmic membrane), and thus conserves the redox energy in a proton gradient. This is NADH-quinone oxidoreductase subunit N from Anaplasma marginale (strain Florida).